The following is a 528-amino-acid chain: Probable rhamnogalacturonate lyase A (528 aa).

The first 20 residues, 1 to 20 (MFFQTGLLLSLSLWTKVAYA), serve as a signal peptide directing secretion. 2 disulfides stabilise this stretch: Cys50/Cys93 and Cys184/Cys193. Asn56 carries N-linked (GlcNAc...) asparagine glycosylation. Asn351 carries an N-linked (GlcNAc...) asparagine glycan.

This sequence belongs to the polysaccharide lyase 4 family.

The protein localises to the secreted. The enzyme catalyses Endotype eliminative cleavage of L-alpha-rhamnopyranosyl-(1-&gt;4)-alpha-D-galactopyranosyluronic acid bonds of rhamnogalacturonan I domains in ramified hairy regions of pectin leaving L-rhamnopyranose at the reducing end and 4-deoxy-4,5-unsaturated D-galactopyranosyluronic acid at the non-reducing end.. Functionally, pectinolytic enzymes consist of four classes of enzymes: pectin lyase, polygalacturonase, pectin methylesterase and rhamnogalacturonase. Degrades the rhamnogalacturonan I (RG-I) backbone of pectin. Active against linseed rhamnogalacturonan. The chain is Probable rhamnogalacturonate lyase A (rglA) from Aspergillus clavatus (strain ATCC 1007 / CBS 513.65 / DSM 816 / NCTC 3887 / NRRL 1 / QM 1276 / 107).